Reading from the N-terminus, the 122-residue chain is uncharacterized protein (122 aa).

Transmembrane regions (helical) follow at residues Trp-14–Val-34 and Ile-83–Ile-103.

It localises to the cell membrane. This is an uncharacterized protein from Ureaplasma parvum serovar 3 (strain ATCC 700970).